A 275-amino-acid polypeptide reads, in one-letter code: Non-heme chloroperoxidase CPO-A1 (275 aa).

Residues 22-255 (PVVFIHGWPL…KVYEGSSHGI (234 aa)) form the AB hydrolase-1 domain. Residues serine 95, aspartate 224, and histidine 253 each act as charge relay system in the active site.

This sequence belongs to the AB hydrolase superfamily. Bacterial non-heme haloperoxidase / perhydrolase family. Homodimer.

Its activity is regulated as follows. Brominating activity not inhibited by azide, peroxidase activity stimulated by bromide. In terms of biological role, may be a chlorinating enzyme involved in 7-chlorotetracycline biosynthesis. Able to brominate as well. The polypeptide is Non-heme chloroperoxidase CPO-A1 (bpoA1) (Kitasatospora aureofaciens (Streptomyces aureofaciens)).